The chain runs to 227 residues: NDR1/HIN1-like protein 10 (227 aa).

A helical membrane pass occupies residues 42 to 62 (VKVIISLIVILGVAALIFWLI). Residues Asn-138 and Asn-210 are each glycosylated (N-linked (GlcNAc...) asparagine).

As to expression, expressed in senescing leaves.

Its subcellular location is the cell membrane. In terms of biological role, may play a role in plant immunity. This chain is NDR1/HIN1-like protein 10, found in Arabidopsis thaliana (Mouse-ear cress).